The chain runs to 299 residues: MLDNTRLRIAIQKSGRLSEDSRELLSRCGIKVNLHTQRLIALAENMPIDILRVRDDDIPGLVMDGVVDLGIIGENVLEEELLSRRAQGEDPRYFTLRRLDFGGCRLSLATPVDEAWNGPAALDGKRIATSYPHLLKRYLDQKGISFKSCLLNGSVEVAPRAGLADAICDLVSTGATLEANGLREVEVIYRSKACLIQRDGEMADAKQQLIDRLLTRIQGVIQARESKYIMMHAPTERLEEVVALLPGAERPTILPLAGDKQRVAMHMVSSETLFWETMEKLKALGASSILVLPIEKMME.

The protein belongs to the ATP phosphoribosyltransferase family. Long subfamily. Equilibrium between an active dimeric form, an inactive hexameric form and higher aggregates. Interconversion between the various forms is largely reversible and is influenced by the natural substrates and inhibitors of the enzyme. Requires Mg(2+) as cofactor.

The protein localises to the cytoplasm. The catalysed reaction is 1-(5-phospho-beta-D-ribosyl)-ATP + diphosphate = 5-phospho-alpha-D-ribose 1-diphosphate + ATP. It functions in the pathway amino-acid biosynthesis; L-histidine biosynthesis; L-histidine from 5-phospho-alpha-D-ribose 1-diphosphate: step 1/9. With respect to regulation, feedback inhibited by histidine. Catalyzes the condensation of ATP and 5-phosphoribose 1-diphosphate to form N'-(5'-phosphoribosyl)-ATP (PR-ATP). Has a crucial role in the pathway because the rate of histidine biosynthesis seems to be controlled primarily by regulation of HisG enzymatic activity. This Klebsiella pneumoniae (strain 342) protein is ATP phosphoribosyltransferase.